The following is a 1564-amino-acid chain: Abnormal spindle-like microcephaly-associated protein homolog (1564 aa).

IQ domains lie at tyrosine 31–serine 60, leucine 220–glutamine 251, threonine 270–lysine 299, isoleucine 293–lysine 322, methionine 366–serine 395, glutamine 389–glutamine 420, valine 439–lysine 468, glutamine 462–lysine 491, alanine 512–lysine 541, glutamate 535–glutamine 566, glutamine 608–glutamine 639, threonine 658–threonine 687, cysteine 681–glutamine 712, leucine 731–lysine 762, methionine 754–glutamine 785, isoleucine 804–glutamine 835, leucine 827–threonine 856, leucine 877–glutamine 908, methionine 900–glutamine 931, leucine 949–glutamine 980, methionine 972–glutamine 1003, glutamine 1022–glutamine 1053, methionine 1045–glutamine 1076, leucine 1095–glutamine 1126, glutamine 1168–glutamine 1199, histidine 1304–arginine 1333, methionine 1327–glutamine 1358, valine 1377–alanine 1406, glutamine 1452–serine 1483, glutamine 1474–alanine 1503, and glutamine 1500–glutamine 1531.

It localises to the cytoplasm. It is found in the nucleus. Its function is as follows. Probable role in mitotic spindle regulation and coordination of mitotic processes. May have a preferential role in regulating neurogenesis. The sequence is that of Abnormal spindle-like microcephaly-associated protein homolog (ASPM) from Ateles geoffroyi (Black-handed spider monkey).